A 370-amino-acid chain; its full sequence is NSFL1 cofactor p47 (370 aa).

Residues 54–73 are disordered; it reads SQATPSSVSRGTAPSDNRVT. S74, S102, S114, and S140 each carry phosphoserine. 2 disordered regions span residues 80–116 and 138–157; these read HDQD…KSPN and TKSP…GYRL. Positions 109–115 match the Nuclear localization signal motif; sequence PPRKKSP. Y167 is subject to Phosphotyrosine. The Nuclear localization signal motif lies at 172 to 175; that stretch reads RRRH. S176, S192, and S272 each carry phosphoserine. The SEP domain occupies 179 to 244; that stretch reads DVHVVLKLWK…MEDHRDEDFV (66 aa). Residues 291 to 368 enclose the UBX domain; sequence EAEPTTNIQI…NLLNAVIVQR (78 aa).

This sequence belongs to the NSFL1C family. Part of a ternary complex containing STX5A, NSFL1C and VCP. NSFL1C forms a homotrimer that binds to one end of a VCP homohexamer. The complex binds to membranes enriched in phosphatidylethanolamine-containing lipids and promotes Golgi membrane fusion. Interaction with VCIP135 leads to dissociation of the complex via ATP hydrolysis by VCP. Binds ubiquitin and mono-ubiquitinated proteins via its N-terminal UBA-like domain when bound to VCP. Phosphorylated during mitosis. Phosphorylation inhibits interaction with Golgi membranes and is required for the fragmentation of the Golgi stacks during mitosis.

The protein resides in the nucleus. Its subcellular location is the golgi apparatus. It is found in the golgi stack. The protein localises to the chromosome. It localises to the cytoplasm. The protein resides in the cytoskeleton. Its subcellular location is the microtubule organizing center. It is found in the centrosome. In terms of biological role, reduces the ATPase activity of VCP. Necessary for the fragmentation of Golgi stacks during mitosis and for VCP-mediated reassembly of Golgi stacks after mitosis. May play a role in VCP-mediated formation of transitional endoplasmic reticulum (tER). Inhibits the activity of CTSL (in vitro). Together with UBXN2B/p37, regulates the centrosomal levels of kinase AURKA/Aurora A during mitotic progression by promoting AURKA removal from centrosomes in prophase. Also, regulates spindle orientation during mitosis. The polypeptide is NSFL1 cofactor p47 (Nsfl1c) (Mus musculus (Mouse)).